The sequence spans 365 residues: Chorismate synthase (365 aa).

NADP(+) contacts are provided by Arg-48 and Arg-54. Residues 125–127 (RSS), 238–239 (NA), Gly-278, 293–297 (KPTSS), and Arg-319 each bind FMN.

It belongs to the chorismate synthase family. Homotetramer. Requires FMNH2 as cofactor.

It carries out the reaction 5-O-(1-carboxyvinyl)-3-phosphoshikimate = chorismate + phosphate. Its pathway is metabolic intermediate biosynthesis; chorismate biosynthesis; chorismate from D-erythrose 4-phosphate and phosphoenolpyruvate: step 7/7. Catalyzes the anti-1,4-elimination of the C-3 phosphate and the C-6 proR hydrogen from 5-enolpyruvylshikimate-3-phosphate (EPSP) to yield chorismate, which is the branch point compound that serves as the starting substrate for the three terminal pathways of aromatic amino acid biosynthesis. This reaction introduces a second double bond into the aromatic ring system. This chain is Chorismate synthase, found in Janthinobacterium sp. (strain Marseille) (Minibacterium massiliensis).